A 180-amino-acid chain; its full sequence is 3-phenylpropionate/cinnamic acid dioxygenase subunit beta (180 aa).

The protein belongs to the bacterial ring-hydroxylating dioxygenase beta subunit family. This dioxygenase system consists of four proteins: the two subunits of the hydroxylase component (HcaE and HcaF), a ferredoxin (HcaC) and a ferredoxin reductase (HcaD).

It carries out the reaction 3-phenylpropanoate + NADH + O2 + H(+) = 3-(cis-5,6-dihydroxycyclohexa-1,3-dien-1-yl)propanoate + NAD(+). The catalysed reaction is (E)-cinnamate + NADH + O2 + H(+) = (2E)-3-(cis-5,6-dihydroxycyclohexa-1,3-dien-1-yl)prop-2-enoate + NAD(+). Its pathway is aromatic compound metabolism; 3-phenylpropanoate degradation. Its function is as follows. Part of the multicomponent 3-phenylpropionate dioxygenase. Converts 3-phenylpropionic acid (PP) and cinnamic acid (CI) into 3-phenylpropionate-dihydrodiol (PP-dihydrodiol) and cinnamic acid-dihydrodiol (CI-dihydrodiol), respectively. The polypeptide is 3-phenylpropionate/cinnamic acid dioxygenase subunit beta (Photorhabdus laumondii subsp. laumondii (strain DSM 15139 / CIP 105565 / TT01) (Photorhabdus luminescens subsp. laumondii)).